The following is a 453-amino-acid chain: L-cysteine:1D-myo-inositol 2-amino-2-deoxy-alpha-D-glucopyranoside ligase (453 aa).

C58 contacts Zn(2+). Residues 58–61 (CGIT), T73, and 96–98 (NVT) each bind L-cysteinyl-5'-AMP. A 'HIGH' region motif is present at residues 60–70 (ITPYDATHMGH). The 'ERGGDP' region motif lies at 221–226 (ERGGDP). W262 contacts L-cysteinyl-5'-AMP. C266 is a Zn(2+) binding site. Residue 284–286 (GND) participates in L-cysteinyl-5'-AMP binding. H291 contributes to the Zn(2+) binding site. An L-cysteinyl-5'-AMP-binding site is contributed by V317. Positions 323-327 (KMSKS) match the 'KMSKS' region motif.

This sequence belongs to the class-I aminoacyl-tRNA synthetase family. MshC subfamily. As to quaternary structure, monomer. The cofactor is Zn(2+).

The catalysed reaction is 1D-myo-inositol 2-amino-2-deoxy-alpha-D-glucopyranoside + L-cysteine + ATP = 1D-myo-inositol 2-(L-cysteinylamino)-2-deoxy-alpha-D-glucopyranoside + AMP + diphosphate + H(+). Catalyzes the ATP-dependent condensation of GlcN-Ins and L-cysteine to form L-Cys-GlcN-Ins. The chain is L-cysteine:1D-myo-inositol 2-amino-2-deoxy-alpha-D-glucopyranoside ligase from Rothia mucilaginosa (strain DY-18) (Stomatococcus mucilaginosus).